Reading from the N-terminus, the 88-residue chain is MAEAEKLVRTLTGKVVSDKMDKSVVVLIERRVKHPVYGKYVSKSTKIKAHDENNECNQGDTVTIAESRPLSKTKSWTLVKIEERATRI.

Belongs to the universal ribosomal protein uS17 family. Part of the 30S ribosomal subunit.

Its function is as follows. One of the primary rRNA binding proteins, it binds specifically to the 5'-end of 16S ribosomal RNA. In Teredinibacter turnerae (strain ATCC 39867 / T7901), this protein is Small ribosomal subunit protein uS17.